The following is a 197-amino-acid chain: Caspase recruitment domain-containing protein 16 (197 aa).

Positions 1–91 constitute a CARD domain; that stretch reads MADKVLKEKR…YLAETLGLSA (91 aa).

Homooligomer. Interacts with CASP1, CASP4, CARD8 and RIPK2. Widely expressed. Expressed at higher level in placenta, spleen, lymph node and bone marrow. Weakly or not expressed in thymus.

Functionally, caspase inhibitor. Acts as a regulator of procaspase-1/CASP1 activation implicated in the regulation of the proteolytic maturation of pro-interleukin-1 beta (IL1B) and its release during inflammation. Inhibits the release of IL1B in response to LPS in monocytes. Also induces NF-kappa-B activation during the pro-inflammatory cytokine response. Also able to inhibit CASP1-mediated neuronal cell death, TNF-alpha, hypoxia-, UV-, and staurosporine-mediated cell death but not ER stress-mediated cell death. Acts by preventing activation of caspases CASP1 and CASP4, possibly by preventing the interaction between CASP1 and RIPK2. The polypeptide is Caspase recruitment domain-containing protein 16 (CARD16) (Homo sapiens (Human)).